The chain runs to 359 residues: tRNA-specific 2-thiouridylase MnmA (359 aa).

ATP-binding positions include 7 to 14 and M33; that span reads AMSGGVDS. C101 (nucleophile) is an active-site residue. The cysteines at positions 101 and 198 are disulfide-linked. Residue G125 participates in ATP binding. The segment at 148–150 is interaction with tRNA; that stretch reads KDQ. Catalysis depends on C198, which acts as the Cysteine persulfide intermediate.

It belongs to the MnmA/TRMU family.

It is found in the cytoplasm. It carries out the reaction S-sulfanyl-L-cysteinyl-[protein] + uridine(34) in tRNA + AH2 + ATP = 2-thiouridine(34) in tRNA + L-cysteinyl-[protein] + A + AMP + diphosphate + H(+). Functionally, catalyzes the 2-thiolation of uridine at the wobble position (U34) of tRNA, leading to the formation of s(2)U34. The polypeptide is tRNA-specific 2-thiouridylase MnmA (Chloroflexus aurantiacus (strain ATCC 29366 / DSM 635 / J-10-fl)).